The chain runs to 291 residues: MTENRSKLNKELAQMLKGGVIMDVTSPEQAKIAEDAGACAVMALERIPADIRAAGGVSRMSDPKMIKGIQNAVSIPVMAKVRIGHFVEAQILEAIEIDYIDESEVLSPADDLNHIDKNKFNVPFVCGARDLGEALRRVAEGATMIRTKGEAGTGDIVQAVRHMRTMNSEIRRVVSLRQDELYVAAKDMQVPISLLQFVHDNGKLPVVNFAAGGVATPADAALMMQLGAEGVFVGSGIFKSGNPAKRAAAVVKAVTNYNNPSMLAELSEDLGEAMVGINADEISILMAERGK.

Residue Asp-23 coordinates D-ribose 5-phosphate. Lys-80 acts as the Schiff-base intermediate with D-ribose 5-phosphate in catalysis. A D-ribose 5-phosphate-binding site is contributed by Gly-152. D-glyceraldehyde 3-phosphate is bound at residue Arg-164. D-ribose 5-phosphate contacts are provided by residues Gly-213 and 234–235 (GS).

It belongs to the PdxS/SNZ family. As to quaternary structure, in the presence of PdxT, forms a dodecamer of heterodimers.

The catalysed reaction is aldehydo-D-ribose 5-phosphate + D-glyceraldehyde 3-phosphate + L-glutamine = pyridoxal 5'-phosphate + L-glutamate + phosphate + 3 H2O + H(+). It participates in cofactor biosynthesis; pyridoxal 5'-phosphate biosynthesis. Functionally, catalyzes the formation of pyridoxal 5'-phosphate from ribose 5-phosphate (RBP), glyceraldehyde 3-phosphate (G3P) and ammonia. The ammonia is provided by the PdxT subunit. Can also use ribulose 5-phosphate and dihydroxyacetone phosphate as substrates, resulting from enzyme-catalyzed isomerization of RBP and G3P, respectively. The protein is Pyridoxal 5'-phosphate synthase subunit PdxS of Methanocorpusculum labreanum (strain ATCC 43576 / DSM 4855 / Z).